Consider the following 444-residue polypeptide: MNHSRSHALFVQAQTRIPGGVNSPVRAFRSVGGEPFFVARADGPYLFDVDGHRYIDYVGSWGPMIVGHNHPGVREAVQVAISNGLSYGAPCAAEVTMAETIARLVPSCQMVRMVNSGTEATLSAIRLARGATGRNYIVKFEGCYHGHGDSFLVKGGSGMLTLGLPSSPGVPAELSKLTITLTYNDFDAATALFEEMGHHIAAVIVEPVIGNANCIPPRPGYLQHLRTLCTQYGVLLIFDEVMTGFRVALGGAQALYGVTPDLTTFGKIIGGGMPVGAYGGRRDLMQHIAPAGPIYQAGTLSGNPVAMAAGLAMLELIQAPDFYTHLSNAAAALCTGLQQAASQAGIAMTTQQIGGMFGLFFTDQQVETYAQATACNTDRFNRFFHAMLQRGVFFAPSAYEAGFISSAHSPNIIEATLEAARTAFQTIANEAAILSKSETPIKMR.

Lys-267 carries the post-translational modification N6-(pyridoxal phosphate)lysine.

This sequence belongs to the class-III pyridoxal-phosphate-dependent aminotransferase family. HemL subfamily. As to quaternary structure, homodimer. The cofactor is pyridoxal 5'-phosphate.

Its subcellular location is the cytoplasm. It carries out the reaction (S)-4-amino-5-oxopentanoate = 5-aminolevulinate. It functions in the pathway porphyrin-containing compound metabolism; protoporphyrin-IX biosynthesis; 5-aminolevulinate from L-glutamyl-tRNA(Glu): step 2/2. In Xylella fastidiosa (strain M12), this protein is Glutamate-1-semialdehyde 2,1-aminomutase.